We begin with the raw amino-acid sequence, 631 residues long: Chaperone protein HtpG (631 aa).

The a; substrate-binding stretch occupies residues 1 to 339 (MSTNQETRGF…SNDLPLNVSR (339 aa)). The interval 340–555 (EILQDNKVTS…DDQMTTQMAK (216 aa)) is b. Positions 556–631 (LFAAAGQAMP…NTLLSKLTSH (76 aa)) are c.

This sequence belongs to the heat shock protein 90 family. As to quaternary structure, homodimer.

The protein localises to the cytoplasm. Its function is as follows. Molecular chaperone. Has ATPase activity. The protein is Chaperone protein HtpG of Pasteurella multocida (strain Pm70).